Here is a 316-residue protein sequence, read N- to C-terminus: Ferrochelatase (316 aa).

Fe cation contacts are provided by His190 and Glu271.

It belongs to the ferrochelatase family.

The protein localises to the cytoplasm. The enzyme catalyses heme b + 2 H(+) = protoporphyrin IX + Fe(2+). Its pathway is porphyrin-containing compound metabolism; protoheme biosynthesis; protoheme from protoporphyrin-IX: step 1/1. Its function is as follows. Catalyzes the ferrous insertion into protoporphyrin IX. The sequence is that of Ferrochelatase from Sulfurimonas denitrificans (strain ATCC 33889 / DSM 1251) (Thiomicrospira denitrificans (strain ATCC 33889 / DSM 1251)).